The primary structure comprises 360 residues: Glutamate 5-kinase (360 aa).

K11 lines the ATP pocket. The substrate site is built by S51, D138, and N150. The region spanning 278–356 is the PUA domain; that stretch reads KGEIHINECA…GKKPVVHYDY (79 aa).

The protein belongs to the glutamate 5-kinase family.

The protein localises to the cytoplasm. The enzyme catalyses L-glutamate + ATP = L-glutamyl 5-phosphate + ADP. It participates in amino-acid biosynthesis; L-proline biosynthesis; L-glutamate 5-semialdehyde from L-glutamate: step 1/2. Functionally, catalyzes the transfer of a phosphate group to glutamate to form L-glutamate 5-phosphate. The chain is Glutamate 5-kinase from Bacteroides thetaiotaomicron (strain ATCC 29148 / DSM 2079 / JCM 5827 / CCUG 10774 / NCTC 10582 / VPI-5482 / E50).